Consider the following 212-residue polypeptide: 3-demethoxyubiquinol 3-hydroxylase (212 aa).

Residues Glu61, Glu91, His94, Glu143, Glu175, and His178 each contribute to the Fe cation site.

This sequence belongs to the COQ7 family. Fe cation serves as cofactor.

It localises to the cell membrane. It catalyses the reaction a 5-methoxy-2-methyl-3-(all-trans-polyprenyl)benzene-1,4-diol + AH2 + O2 = a 3-demethylubiquinol + A + H2O. The protein operates within cofactor biosynthesis; ubiquinone biosynthesis. Its function is as follows. Catalyzes the hydroxylation of 2-nonaprenyl-3-methyl-6-methoxy-1,4-benzoquinol during ubiquinone biosynthesis. The chain is 3-demethoxyubiquinol 3-hydroxylase from Methylibium petroleiphilum (strain ATCC BAA-1232 / LMG 22953 / PM1).